Here is a 335-residue protein sequence, read N- to C-terminus: Mevalonate kinase (335 aa).

111–121 (PVGAGLGSSAA) is an ATP binding site. The active-site Proton acceptor is D162.

This sequence belongs to the GHMP kinase family. Mevalonate kinase subfamily. In terms of assembly, homodimer. Requires Mg(2+) as cofactor.

It is found in the cytoplasm. It carries out the reaction (R)-mevalonate + ATP = (R)-5-phosphomevalonate + ADP + H(+). It functions in the pathway isoprenoid biosynthesis; isopentenyl diphosphate biosynthesis via mevalonate pathway; isopentenyl diphosphate from (R)-mevalonate: step 1/3. Catalyzes the phosphorylation of (R)-mevalonate (MVA) to (R)-mevalonate 5-phosphate (MVAP). Functions in the mevalonate (MVA) pathway leading to isopentenyl diphosphate (IPP), a key precursor for the biosynthesis of isoprenoid compounds such as archaeal membrane lipids. The chain is Mevalonate kinase from Pyrococcus horikoshii (strain ATCC 700860 / DSM 12428 / JCM 9974 / NBRC 100139 / OT-3).